The primary structure comprises 887 residues: 3-hydroxy-3-methylglutaryl-coenzyme A reductase (887 aa).

Residues 1-9 (MLSRLFRMH) are Cytoplasmic-facing. A helical membrane pass occupies residues 10 to 39 (GLFVASHPWEVIVGTVTLTICMMSMNMFTG). Residues 40 to 56 (NNKICGWNYECPKFEED) lie on the Lumenal side of the membrane. Residues 57–78 (VLSSDIIILTITRCIAILYIYF) traverse the membrane as a helical segment. One can recognise an SSD domain in the interval 61-218 (DIIILTITRC…MTFFPACVSL (158 aa)). The INSIG-binding motif motif lies at 75–78 (YIYF). Over 79 to 89 (QFQNLRQLGSK) the chain is Cytoplasmic. A Glycyl lysine isopeptide (Lys-Gly) (interchain with G-Cter in ubiquitin) cross-link involves residue lysine 89. The helical transmembrane segment at 90–114 (YILGIAGLFTIFSSFVFSTVVIHFL) threads the bilayer. Residues 115–123 (DKELTGLNE) lie on the Lumenal side of the membrane. Residues 124–149 (ALPFFLLLIDLSRASALAKFALSSNS) traverse the membrane as a helical segment. Over 150–159 (QDEVRENIAR) the chain is Cytoplasmic. Residues 160–187 (GMAILGPTFTLDALVECLVIGVGTMSGV) form a helical membrane-spanning segment. Residues 188–191 (RQLE) lie on the Lumenal side of the membrane. A helical transmembrane segment spans residues 192–220 (IMCCFGCMSVLANYFVFMTFFPACVSLVL). The Cytoplasmic portion of the chain corresponds to 221–248 (ELSRESREGRPIWQLSHFARVLEEEENK). A Glycyl lysine isopeptide (Lys-Gly) (interchain with G-Cter in ubiquitin) cross-link involves residue lysine 248. Residues 249–275 (PNPVTQRVKMIMSLGLVLVHAHSRWIA) traverse the membrane as a helical segment. Topologically, residues 276–314 (DPSPQNSTTEHSKVSLGLDEDVSKRIEPSVSLWQFYLSK) are lumenal. An N-linked (GlcNAc...) asparagine glycan is attached at asparagine 281. The helical transmembrane segment at 315-339 (MISMDIEQVVTLSLAFLLAVKYIFF) threads the bilayer. Residues 340 to 887 (EQAETESTLS…LQGTCTKKSA (548 aa)) lie on the Cytoplasmic side of the membrane. Catalysis depends on charge relay system residues glutamate 558, lysine 690, and aspartate 766. Histidine 865 (proton donor) is an active-site residue. A Phosphoserine; by AMPK modification is found at serine 871.

The protein belongs to the HMG-CoA reductase family. As to quaternary structure, homotetramer. Homodimer. Interacts (via its SSD) with INSIG1; the interaction, accelerated by sterols, leads to the recruitment of HMGCR to AMFR/gp78 for its ubiquitination by the sterol-mediated ERAD pathway. Interacts with UBIAD1. Post-translationally, N-glycosylated. Glycosylated with high mannose chains including Man(6)(GlcNAc)(2), Man(7)(GlcNAc)(2) and Man(8)(GlcNAc)(2). Deglycosylated by NGLY1 on release from the endoplasmic reticulum (ER) in a sterol-mediated manner. Undergoes sterol-mediated ubiquitination and ER-associated degradation (ERAD). Accumulation of sterols in the endoplasmic reticulum (ER) membrane, triggers binding of the reductase to the ER membrane protein INSIG1 or INSIG2. The INSIG1 binding leads to the recruitment of the ubiquitin ligase, AMFR/gp78, RNF139 or RNF145, initiating ubiquitination of the reductase. The ubiquitinated reductase is then extracted from the ER membrane and delivered to cytosolic 26S proteosomes by a mechanism probably mediated by the ATPase Valosin-containing protein VCP/p97. The INSIG2-binding leads to the recruitment of the ubiquitin ligase RNF139, initiating ubiquitination of the reductase. Lys-248 is the main site of ubiquitination. Ubiquitination is enhanced by the presence of a geranylgeranylated protein. In terms of processing, phosphorylated. Phosphorylation at Ser-871 reduces the catalytic activity.

It localises to the endoplasmic reticulum membrane. Its subcellular location is the peroxisome membrane. The enzyme catalyses (R)-mevalonate + 2 NADP(+) + CoA = (3S)-3-hydroxy-3-methylglutaryl-CoA + 2 NADPH + 2 H(+). It functions in the pathway metabolic intermediate biosynthesis; (R)-mevalonate biosynthesis; (R)-mevalonate from acetyl-CoA: step 3/3. Its activity is regulated as follows. Regulated by a negative feedback mechanism through sterols and non-sterol metabolites derived from mevalonate. Phosphorylation at Ser-871 down-regulates the catalytic activity. Catalyzes the conversion of (3S)-hydroxy-3-methylglutaryl-CoA (HMG-CoA) to mevalonic acid, the rate-limiting step in the synthesis of cholesterol and other isoprenoids, thus plays a critical role in cellular cholesterol homeostasis. The chain is 3-hydroxy-3-methylglutaryl-coenzyme A reductase (HMGCR) from Cricetulus griseus (Chinese hamster).